Here is a 347-residue protein sequence, read N- to C-terminus: Probable nitronate monooxygenase (347 aa).

FMN-binding positions include Asn-69, Gln-171, Gly-176, Gly-213, and 232-235 (QIGS).

It belongs to the nitronate monooxygenase family. NMO class I subfamily. FMN is required as a cofactor.

The enzyme catalyses 3 propionate 3-nitronate + 3 O2 + H2O = 3 3-oxopropanoate + 2 nitrate + nitrite + H2O2 + 3 H(+). In terms of biological role, nitronate monooxygenase that uses molecular oxygen to catalyze the oxidative denitrification of alkyl nitronates. Acts on propionate 3-nitronate (P3N), the presumed physiological substrate. Probably functions in the detoxification of P3N, a metabolic poison produced by plants and fungi as a defense mechanism. The chain is Probable nitronate monooxygenase (yrpB) from Bacillus subtilis (strain 168).